The chain runs to 683 residues: Transforming growth factor-beta-induced protein ig-h3 (683 aa).

An N-terminal signal peptide occupies residues 1 to 23; that stretch reads MALLMRLLTLALALSVGPAGTLA. Ser37 carries the phosphoserine modification. The EMI domain occupies 45-99; it reads GPNVCAVQKVIGTNKKYFTNCKQWYQRKICGKSTVISYECCPGYEKVPGEKGCPA. Intrachain disulfides connect Cys49–Cys85, Cys74–Cys339, Cys84–Cys97, Cys214–Cys317, and Cys473–Cys478. The residue at position 65 (Cys65) is an S-cysteinyl cysteine. 4 FAS1 domains span residues 103–236, 240–371, 375–498, and 502–632; these read LSNL…DKVI, TNNI…DELL, SAKT…DRML, and MGTV…NTVL. Positions 642-644 match the Cell attachment site motif; the sequence is RGD.

In terms of assembly, binds to type I, II, and IV collagens. Post-translationally, gamma-carboxylation is controversial. Gamma-carboxyglutamated; gamma-carboxyglutamate residues are formed by vitamin K dependent carboxylation; this may be required for calcium binding. According to a more recent report, does not contain vitamin K-dependent gamma-carboxyglutamate residues. The EMI domain contains 2 expected intradomain disulfide bridges (Cys-49-Cys85 and Cys-84-Cys-97) and one unusual interdomain disulfide bridge to the second FAS1 domain (Cys-74-Cys-339). This arrangement violates the predicted disulfide bridge pattern of an EMI domain. As to expression, expressed in heart, kidney, liver, skeletal muscle, testis, thyroid and uterus.

It localises to the secreted. It is found in the extracellular space. Its subcellular location is the extracellular matrix. In terms of biological role, plays a role in cell adhesion. May play a role in cell-collagen interactions. This Mus musculus (Mouse) protein is Transforming growth factor-beta-induced protein ig-h3 (Tgfbi).